A 114-amino-acid chain; its full sequence is Beta-microseminoprotein (114 aa).

The first 20 residues, 1–20, serve as a signal peptide directing secretion; that stretch reads MNVLLGGFVIFATFVTLCNA. 5 cysteine pairs are disulfide-bonded: C22/C70, C38/C62, C57/C93, C60/C69, and C84/C107.

The protein belongs to the beta-microseminoprotein family. Homodimer; Interacts with PI16.

Its subcellular location is the secreted. The sequence is that of Beta-microseminoprotein (MSMB) from Macaca mulatta (Rhesus macaque).